Consider the following 172-residue polypeptide: MAKEASGNVYFDVYANEESLGRIVMKLEDDIVPKTAKNFRTLCERPKGEGYKGSTFHRIIPGFMVQGGDYTAHNGTGGRSIYGEKFPDENFELKHTKEGILSMANCGAHTNGSQFFITLGKTQWLDEKHVVFGEVVEGMDVVHKIAKYGSESGQVKKGYRIEIRDCGVLGSN.

The PPIase cyclophilin-type domain occupies 10 to 168; it reads YFDVYANEES…YRIEIRDCGV (159 aa).

It belongs to the cyclophilin-type PPIase family.

It localises to the cytoplasm. It carries out the reaction [protein]-peptidylproline (omega=180) = [protein]-peptidylproline (omega=0). Its function is as follows. PPIases accelerate the folding of proteins. They catalyze the cis-trans isomerization of proline imidic peptide bonds in oligopeptides. In Encephalitozoon cuniculi (strain GB-M1) (Microsporidian parasite), this protein is Peptidyl-prolyl cis-trans isomerase (CPR1).